A 351-amino-acid chain; its full sequence is MTEMSFLSSEVLVGDLMSPFDQSGLGAEESLGLLDDYLEVAKHFKPHGFSSDKAKAGSSEWLAVDGLVSPSNNSKEDAFSGTDWMLEKMDLKEFDLDALLGIDDLETMPDDLLTTLDDTCDLFAPLVQETNKQPPQTVNPIGHLPESLTKPDQVAPFTFLQPLPLSPGVLSSTPDHSFSLELGSEVDITEGDRKPDYTAYVAMIPQCIKEEDTPSDNDSGICMSPESYLGSPQHSPSTRGSPNRSLPSPGVLCGSARPKPYDPPGEKMVAAKVKGEKLDKKLKKMEQNKTAATRYRQKKRAEQEALTGECKELEKKNEALKERADSLAKEIQYLKDLIEEVRKARGKKRVP.

Lysine 53 is covalently cross-linked (Glycyl lysine isopeptide (Lys-Gly) (interchain with G-Cter in SUMO2)). A disordered region spans residues 210–268; that stretch reads EEDTPSDNDSGICMSPESYLGSPQHSPSTRGSPNRSLPSPGVLCGSARPKPYDPPGEKM. Phosphothreonine is present on threonine 213. Position 215 is a phosphoserine; by CK2 (serine 215). A BetaTrCP degron motif motif is present at residues 215–224; the sequence is SDNDSGICMS. 4 positions are modified to phosphoserine: serine 219, serine 224, serine 231, and serine 235. The segment covering 230–246 has biased composition (polar residues); the sequence is GSPQHSPSTRGSPNRSL. Position 236 is a 4-hydroxyproline (proline 236). Serine 245 carries the phosphoserine; by RPS6KA3 modification. Serine 248 carries the phosphoserine modification. Residues lysine 259, lysine 267, and lysine 272 each participate in a glycyl lysine isopeptide (Lys-Gly) (interchain with G-Cter in SUMO2) cross-link. The bZIP domain maps to 278 to 341; the sequence is LDKKLKKMEQ…QYLKDLIEEV (64 aa). The basic motif stretch occupies residues 280–300; the sequence is KKLKKMEQNKTAATRYRQKKR. Residues 280-340 adopt a coiled-coil conformation; sequence KKLKKMEQNK…IQYLKDLIEE (61 aa). An interaction with GABBR1 region spans residues 305–341; the sequence is ALTGECKELEKKNEALKERADSLAKEIQYLKDLIEEV. Residues 306–334 form a leucine-zipper region; it reads LTGECKELEKKNEALKERADSLAKEIQYL. N6-acetyllysine is present on lysine 311.

It belongs to the bZIP family. As to quaternary structure, binds DNA as a homodimer and as a heterodimer. Heterodimer; heterodimerizes with CEBPB. Heterodimer; heterodimerizes with DDIT3/CHOP. Interacts with CEP290 (via an N-terminal region). Interacts with NEK6, DAPK2 (isoform 2) and ZIPK/DAPK3. Interacts (via its leucine zipper domain) with GABBR1 and GABBR2 (via their C-termini). Forms a heterodimer with TXLNG in osteoblasts. Interacts (via its DNA binding domain) with FOXO1 (C-terminal half); the interaction occurs in osteoblasts and regulates glucose homeostasis through suppression of beta-cell proliferation and a decrease in insulin production. Interacts with SATB2; the interaction results in enhanced DNA binding and transactivation by these transcription factors. Interacts with ABRAXAS2. Interacts with TRIB3, inhibiting the transactivation activity of ATF4. Interacts with DISC1; which inhibits ATF4 transcription factor activity by disrupting ATF4 dimerization and DNA-binding. Interacts with EP300/p300; EP300/p300 stabilizes ATF4 and increases its transcriptional activity independently of its catalytic activity by preventing its ubiquitination. In terms of processing, ubiquitinated by SCF(BTRC) in response to mTORC1 signal, followed by proteasomal degradation and leading to down-regulate expression of SIRT4. Interaction with EP300/p300 inhibits ubiquitination by SCF(BTRC). Phosphorylation at Ser-245 by RPS6KA3/RSK2 in osteoblasts enhances transactivation activity and promotes osteoblast differentiation. Phosphorylated on the betaTrCP degron motif at Ser-219, followed by phosphorylation at Thr-213, Ser-224, Ser-231, Ser-235 and Ser-248, promoting interaction with BTRC and ubiquitination. Phosphorylation is promoted by mTORC1. Phosphorylation at Ser-215 by CK2 decreases its stability. Phosphorylated by NEK6. Post-translationally, hydroxylated by PHD3, leading to decreased protein stability.

It localises to the nucleus. The protein resides in the nucleus speckle. Its subcellular location is the cytoplasm. The protein localises to the cell membrane. It is found in the cytoskeleton. It localises to the microtubule organizing center. The protein resides in the centrosome. Transcription factor that binds the cAMP response element (CRE) (consensus: 5'-GTGACGT[AC][AG]-3') and displays two biological functions, as regulator of metabolic and redox processes under normal cellular conditions, and as master transcription factor during integrated stress response (ISR). Binds to asymmetric CRE's as a heterodimer and to palindromic CRE's as a homodimer. Core effector of the ISR, which is required for adaptation to various stress such as endoplasmic reticulum (ER) stress, amino acid starvation, mitochondrial stress or oxidative stress. During ISR, ATF4 translation is induced via an alternative ribosome translation re-initiation mechanism in response to EIF2S1/eIF-2-alpha phosphorylation, and stress-induced ATF4 acts as a master transcription factor of stress-responsive genes in order to promote cell recovery. Promotes the transcription of genes linked to amino acid sufficiency and resistance to oxidative stress to protect cells against metabolic consequences of ER oxidation. Activates the transcription of NLRP1, possibly in concert with other factors in response to ER stress. Activates the transcription of asparagine synthetase (ASNS) in response to amino acid deprivation or ER stress. However, when associated with DDIT3/CHOP, the transcriptional activation of the ASNS gene is inhibited in response to amino acid deprivation. Together with DDIT3/CHOP, mediates programmed cell death by promoting the expression of genes involved in cellular amino acid metabolic processes, mRNA translation and the terminal unfolded protein response (terminal UPR), a cellular response that elicits programmed cell death when ER stress is prolonged and unresolved. Activates the expression of COX7A2L/SCAF1 downstream of the EIF2AK3/PERK-mediated unfolded protein response, thereby promoting formation of respiratory chain supercomplexes and increasing mitochondrial oxidative phosphorylation. Together with DDIT3/CHOP, activates the transcription of the IRS-regulator TRIB3 and promotes ER stress-induced neuronal cell death by regulating the expression of BBC3/PUMA in response to ER stress. May cooperate with the UPR transcriptional regulator QRICH1 to regulate ER protein homeostasis which is critical for cell viability in response to ER stress. In the absence of stress, ATF4 translation is at low levels and it is required for normal metabolic processes such as embryonic lens formation, fetal liver hematopoiesis, bone development and synaptic plasticity. Acts as a regulator of osteoblast differentiation in response to phosphorylation by RPS6KA3/RSK2: phosphorylation in osteoblasts enhances transactivation activity and promotes expression of osteoblast-specific genes and post-transcriptionally regulates the synthesis of Type I collagen, the main constituent of the bone matrix. Cooperates with FOXO1 in osteoblasts to regulate glucose homeostasis through suppression of beta-cell production and decrease in insulin production. Activates transcription of SIRT4. Regulates the circadian expression of the core clock component PER2 and the serotonin transporter SLC6A4. Binds in a circadian time-dependent manner to the cAMP response elements (CRE) in the SLC6A4 and PER2 promoters and periodically activates the transcription of these genes. Mainly acts as a transcriptional activator in cellular stress adaptation, but it can also act as a transcriptional repressor: acts as a regulator of synaptic plasticity by repressing transcription, thereby inhibiting induction and maintenance of long-term memory. Regulates synaptic functions via interaction with DISC1 in neurons, which inhibits ATF4 transcription factor activity by disrupting ATF4 dimerization and DNA-binding. Functionally, (Microbial infection) Binds to a Tax-responsive enhancer element in the long terminal repeat of HTLV-I. The polypeptide is Cyclic AMP-dependent transcription factor ATF-4 (Homo sapiens (Human)).